The primary structure comprises 788 residues: Endonuclease MutS2 (788 aa).

Residue 332–339 (GPNTGGKT) coordinates ATP. The Smr domain maps to 713 to 788 (VDLRGMDAEE…GTGVTVVEIK (76 aa)).

This sequence belongs to the DNA mismatch repair MutS family. MutS2 subfamily. In terms of assembly, homodimer. Binds to stalled ribosomes, contacting rRNA.

Functionally, endonuclease that is involved in the suppression of homologous recombination and thus may have a key role in the control of bacterial genetic diversity. Acts as a ribosome collision sensor, splitting the ribosome into its 2 subunits. Detects stalled/collided 70S ribosomes which it binds and splits by an ATP-hydrolysis driven conformational change. Acts upstream of the ribosome quality control system (RQC), a ribosome-associated complex that mediates the extraction of incompletely synthesized nascent chains from stalled ribosomes and their subsequent degradation. Probably generates substrates for RQC. The sequence is that of Endonuclease MutS2 from Clostridium botulinum (strain Loch Maree / Type A3).